We begin with the raw amino-acid sequence, 368 residues long: V-type proton ATPase subunit C (368 aa).

It belongs to the V-ATPase C subunit family. V-ATPase is a heteromultimeric enzyme composed of a peripheral catalytic V1 complex (components A to H) attached to an integral membrane V0 proton pore complex (components: a, c, c', c'' and d).

Subunit of the peripheral V1 complex of vacuolar ATPase. Subunit C is necessary for the assembly of the catalytic sector of the enzyme and is likely to have a specific function in its catalytic activity. V-ATPase is responsible for acidifying a variety of intracellular compartments in eukaryotic cells. The protein is V-type proton ATPase subunit C (vatC) of Dictyostelium discoideum (Social amoeba).